The chain runs to 897 residues: MDGAAGPGEGPAHETLQTLSQRLRVQEEEMELVKAALAEALRLLRLHGSTTTLQGSGISAPTRNSSITVPPGLPPTCSPSLVTRGTQTEEELEIVPSSGPPGLSNGPPALQGGSEEPSGTQSEGGCSSSSGAGSPGPPGILRPVQPLQRSDTPRRNSSSSSSPSERPRQKLSRKAASSANLLLRSGSTESRGNKDPLSSPGGPGSRRSNYNLEGISVKMFLRGRPITMYIPSGIRSLEELPSGPPPETLSLDWVYGYRGRDSRSNLFVLRSGEVVYFIACVVVLYRPGGGPGGPGGGGQRHYRGHTDCVRCLAVHPDGVRVASGQTAGVDKDGKPLQPVVHIWDSETLLKLQEIGLGAFERGVGALAFSAADQGAFLCVVDDSNEHMLSVWDCSRGVKLAEIKSTNDSVLAVGFSPRDSSCIVTSGKSHVHFWNWSGGTGAPGNGLLARKQGVFGKYKKPKFIPCFVFLPDGDILTGDSEGNILTWGRSVSDSKTPGRGGAKETYTIVAQAHAHEGSIFALCLRRDGTVLSGGGRDRRLVQWGPGLVALQEAEIPEHFGAVRAIAEGLGSELLVGTTKNALLRGDLAQGFSPVIQGHTDELWGLCTHPSQNRFLTCGHDRQLCLWDGEGHALAWSMDLKETGLCADFHPSGAVVVVGLNTGRWLVLDTETREIVSDVTDGNEQLSVVRYSPDGLYLAIGSHDNMIYIYSVSSCGTKSSRFGRCMGHSSFITHLDWSKDGNFIMSNSGDYEILYWDVAGGCKLLRNRYESRDREWATYTCVLGFHVYGVWPDGSDGTDINSLCRSHNERVVAVADDFCKVHLFQYPCARAKAPSRMYSGHGSHVTSVRFTHDDSYLVSLGGKDASIFQWRVLGAGSSGPAPATPSRTPSLSPASSLDV.

Position 1 is an N-acetylmethionine (M1). Residues L16–L43 are a coiled coil. Residues T51–T68 are compositionally biased toward polar residues. The tract at residues T51–Y210 is disordered. Low complexity-rich tracts occupy residues P96–P108, S118–A132, and R155–S164. The span at A175 to S190 shows a compositional bias: polar residues. 3 positions are modified to phosphoserine: S177, S199, and S205. WD repeat units follow at residues R235–P287, G296–S345, L351–C393, L399–W435, R449–R488, Y505–P544, Q550–D585, F590–G627, H630–T668, S675–V710, S717–V756, R766–Y824, and A831–V870. Residues S876–V897 are disordered. T882 is subject to Phosphothreonine; by CDK1. Residues P883 to V897 are compositionally biased toward polar residues. Position 884 is a phosphoserine (S884).

This sequence belongs to the WD repeat EMAP family. Homotrimer; self-association is mediated by the N-terminal coiled coil. Interacts with EML2 but not with EML1. Interacts (phosphorylated at Thr-882) with TUBG1, HAUS1, HAUS2, HAUS3, HAUS4, HAUS5, HAUS6, HAUS7 and HAUS8. Post-translationally, phosphorylation at Thr-882 during mitosis is required for interaction with TUBG1, HAUS1, HAUS2, HAUS3, HAUS4, HAUS5, HAUS6, HAUS7 and HAUS8 and their recruitment to spindle microtubules.

It localises to the cytoplasm. Its subcellular location is the cytoskeleton. It is found in the nucleus. The protein resides in the midbody. The protein localises to the spindle. In terms of biological role, regulates mitotic spindle assembly, microtubule (MT)-kinetochore attachment and chromosome separation via recruitment of HAUS augmin-like complex and TUBG1 to the existing MTs and promoting MT-based MT nucleation. Required for proper alignnment of chromosomes during metaphase. The protein is Echinoderm microtubule-associated protein-like 3 (Eml3) of Mus musculus (Mouse).